The primary structure comprises 561 residues: Arginine--tRNA ligase (561 aa).

A 'HIGH' region motif is present at residues 136–146; sequence ANPTGLLHMGN.

It belongs to the class-I aminoacyl-tRNA synthetase family. As to quaternary structure, monomer.

It localises to the cytoplasm. The enzyme catalyses tRNA(Arg) + L-arginine + ATP = L-arginyl-tRNA(Arg) + AMP + diphosphate. In Desulforamulus reducens (strain ATCC BAA-1160 / DSM 100696 / MI-1) (Desulfotomaculum reducens), this protein is Arginine--tRNA ligase.